The chain runs to 319 residues: tRNA dimethylallyltransferase (319 aa).

Residue Gly-10–Thr-17 coordinates ATP. Thr-12–Thr-17 is a binding site for substrate. The tract at residues Asp-35–Gln-38 is interaction with substrate tRNA.

It belongs to the IPP transferase family. Monomer. Mg(2+) is required as a cofactor.

It catalyses the reaction adenosine(37) in tRNA + dimethylallyl diphosphate = N(6)-dimethylallyladenosine(37) in tRNA + diphosphate. Catalyzes the transfer of a dimethylallyl group onto the adenine at position 37 in tRNAs that read codons beginning with uridine, leading to the formation of N6-(dimethylallyl)adenosine (i(6)A). This Symbiobacterium thermophilum (strain DSM 24528 / JCM 14929 / IAM 14863 / T) protein is tRNA dimethylallyltransferase.